A 383-amino-acid chain; its full sequence is 8-amino-7-oxononanoate synthase (383 aa).

Residues Arg-27 and Arg-34 each coordinate substrate. 114–115 (GY) serves as a coordination point for pyridoxal 5'-phosphate. His-139 is a substrate binding site. Residues Ser-187, 212–215 (DDAH), and 232–235 (TLSK) each bind pyridoxal 5'-phosphate. At Lys-235 the chain carries N6-(pyridoxal phosphate)lysine. Thr-344 provides a ligand contact to substrate.

It belongs to the class-II pyridoxal-phosphate-dependent aminotransferase family. BioF subfamily. As to quaternary structure, homodimer. The cofactor is pyridoxal 5'-phosphate.

It catalyses the reaction 6-carboxyhexanoyl-[ACP] + L-alanine + H(+) = (8S)-8-amino-7-oxononanoate + holo-[ACP] + CO2. It participates in cofactor biosynthesis; biotin biosynthesis. In terms of biological role, catalyzes the decarboxylative condensation of pimeloyl-[acyl-carrier protein] and L-alanine to produce 8-amino-7-oxononanoate (AON), [acyl-carrier protein], and carbon dioxide. In Methylorubrum extorquens (strain CM4 / NCIMB 13688) (Methylobacterium extorquens), this protein is 8-amino-7-oxononanoate synthase.